A 141-amino-acid chain; its full sequence is MLMPKRTKYRKMMKGRNRGYANRGTEFTFGEFALKATEAGRINSRQIEAARIALTRFVKRQGKTWIRVFPDKPLTKKPLETRMGKGKGAVEEWVMNIKPGRIIYEMAGVSEEMAREALTLAMHKLPFKTKFVTRESQNEIY.

The protein belongs to the universal ribosomal protein uL16 family. As to quaternary structure, part of the 50S ribosomal subunit.

Binds 23S rRNA and is also seen to make contacts with the A and possibly P site tRNAs. This is Large ribosomal subunit protein uL16 from Campylobacter jejuni subsp. jejuni serotype O:6 (strain 81116 / NCTC 11828).